Consider the following 439-residue polypeptide: MLRFAPSPTGDMHIGNLRAAIFNYIVAKQQHKPFLIRIEDTDKERNIEGKDREILEILKLMGISWDKLVYQSHNIDYHREMAEKLLKENKAFYCYASAEFLEREKEKAKNEKRPFRYLDEWATLEKDKNHAPVVRLKAPNHAVSFNDAIKKEVKFEPDELDSFVLLRQDKSPTYNFACACDDLLYEISLIIRGEDHVSNTPKQILIQQALGLNDPIVYAHLPIILDETSGKKMSKRDEASSVKWLLNQGFLPVAIGNYLITIGNKVPKEVFSLDEAIEWFSLENLSSSPAHFNLKYLKHLNHEHLKLLDDEKLLELTLIKDKNLLGLLRLFIEECGTLLELKEKISLFLEPKDIVKTYENEDFKERCLALFNALKSMDFQAYKDFESFKKEAMRLSQLKGKDFFKPLRILLTGNSHGVELPLIFPYIQSHHQEVLRLKA.

The 'HIGH' region signature appears at 6 to 16 (PSPTGDMHIGN). Positions 232-236 (KMSKR) match the 'KMSKS' region motif. Lys-235 serves as a coordination point for ATP.

Belongs to the class-I aminoacyl-tRNA synthetase family. Glutamate--tRNA ligase type 1 subfamily. As to quaternary structure, monomer.

The protein localises to the cytoplasm. The catalysed reaction is tRNA(Glu) + L-glutamate + ATP = L-glutamyl-tRNA(Glu) + AMP + diphosphate. Functionally, catalyzes the attachment of glutamate to tRNA(Glu) in a two-step reaction: glutamate is first activated by ATP to form Glu-AMP and then transferred to the acceptor end of tRNA(Glu). The polypeptide is Glutamate--tRNA ligase 2 (Helicobacter pylori (strain P12)).